The following is a 341-amino-acid chain: Protein MENT (341 aa).

Positions 1 to 23 (MVPAAGALLWVLLLNLGPRAAGA) are cleaved as a signal peptide. The tract at residues 115 to 196 (AGKDSTSREL…SPSPTAMPSP (82 aa)) is disordered. The segment covering 127–155 (ATPNTAGSSSTRFIANSQEPEIRLTSSLP) has biased composition (polar residues).

Phosphorylation sites are present in the extracellular medium. As to expression, plasma. Overexpressed in lymphomas.

Its subcellular location is the secreted. In terms of biological role, involved in control of cellular proliferation. Onconcogenic modifier contributing to the tumor suppressor function of DNMT3B. This chain is Protein MENT (MENT), found in Homo sapiens (Human).